We begin with the raw amino-acid sequence, 480 residues long: 3-isopropylmalate dehydratase large subunit (480 aa).

Residues Cys-361, Cys-421, and Cys-424 each coordinate [4Fe-4S] cluster.

This sequence belongs to the aconitase/IPM isomerase family. LeuC type 1 subfamily. As to quaternary structure, heterodimer of LeuC and LeuD. It depends on [4Fe-4S] cluster as a cofactor.

It carries out the reaction (2R,3S)-3-isopropylmalate = (2S)-2-isopropylmalate. It functions in the pathway amino-acid biosynthesis; L-leucine biosynthesis; L-leucine from 3-methyl-2-oxobutanoate: step 2/4. Functionally, catalyzes the isomerization between 2-isopropylmalate and 3-isopropylmalate, via the formation of 2-isopropylmaleate. In Corynebacterium diphtheriae (strain ATCC 700971 / NCTC 13129 / Biotype gravis), this protein is 3-isopropylmalate dehydratase large subunit.